We begin with the raw amino-acid sequence, 57 residues long: Large ribosomal subunit protein bL32 (57 aa).

The segment covering 1 to 19 has biased composition (basic residues); it reads MAVPKRRKSRSNTRSRRSQ. The disordered stretch occupies residues 1-22; the sequence is MAVPKRRKSRSNTRSRRSQWKA.

The protein belongs to the bacterial ribosomal protein bL32 family.

In Mycobacterium tuberculosis (strain ATCC 25177 / H37Ra), this protein is Large ribosomal subunit protein bL32.